A 261-amino-acid polypeptide reads, in one-letter code: Putative ankyrin repeat protein L99 (261 aa).

ANK repeat units lie at residues 21–50, 51–80, 81–110, 112–140, 142–170, 171–203, and 231–259; these read KVNP…DVHA, HEDY…NIHS, DRDL…NVNA, QNSA…NIHA, NNFC…DINA, DNGA…IDNC, and NELK…NINS.

This is Putative ankyrin repeat protein L99 from Acanthamoeba polyphaga (Amoeba).